We begin with the raw amino-acid sequence, 116 residues long: Ribosome-binding factor A (116 aa).

This sequence belongs to the RbfA family. In terms of assembly, monomer. Binds 30S ribosomal subunits, but not 50S ribosomal subunits or 70S ribosomes.

Its subcellular location is the cytoplasm. In terms of biological role, one of several proteins that assist in the late maturation steps of the functional core of the 30S ribosomal subunit. Associates with free 30S ribosomal subunits (but not with 30S subunits that are part of 70S ribosomes or polysomes). Required for efficient processing of 16S rRNA. May interact with the 5'-terminal helix region of 16S rRNA. In Staphylococcus aureus (strain JH9), this protein is Ribosome-binding factor A.